Reading from the N-terminus, the 195-residue chain is Replication restart protein PriC (195 aa).

It belongs to the PriC family. As to quaternary structure, monomer. Component of the replication restart primosome, which is composed of PriA, PriB, PriC, DnaB and DnaT; DnaG primase associates transiently with this complex. Interacts with the C-terminus of SSB; this interaction is required to load the main replicative helicase onto substrate replication forks. Interacts with helicase DnaB alone and in the DnaB-DnaC complex, probably 1:1 binding with DnaB.

Functionally, involved in the restart of stalled replication forks, which reloads the DnaB replicative helicase on sites other than the origin of replication. Recognizes abandoned replication forks and remodels DNA single-stranded binding protein (SSB) on ssDNA to uncover a loading site for DnaB. There are several restart pathways, the PriA-PriC pathway is a minor restart pathway. Part of the minor PriC-Rep pathway for restart of stalled replication forks, which has a different substrate specificity than PriA. Part of the major restart pathway with PriA, PriB, DnaB, DnaT and DnaG primase. priB and priC have redundant roles in the cell. The chain is Replication restart protein PriC from Haemophilus influenzae (strain ATCC 51907 / DSM 11121 / KW20 / Rd).